A 285-amino-acid polypeptide reads, in one-letter code: Probable endonuclease 4 (285 aa).

Residues H69, H109, E145, D179, H182, H216, D229, H231, and E261 each coordinate Zn(2+).

This sequence belongs to the AP endonuclease 2 family. The cofactor is Zn(2+).

The catalysed reaction is Endonucleolytic cleavage to 5'-phosphooligonucleotide end-products.. Its function is as follows. Endonuclease IV plays a role in DNA repair. It cleaves phosphodiester bonds at apurinic or apyrimidinic (AP) sites, generating a 3'-hydroxyl group and a 5'-terminal sugar phosphate. The chain is Probable endonuclease 4 from Escherichia fergusonii (strain ATCC 35469 / DSM 13698 / CCUG 18766 / IAM 14443 / JCM 21226 / LMG 7866 / NBRC 102419 / NCTC 12128 / CDC 0568-73).